A 246-amino-acid polypeptide reads, in one-letter code: Putative L,D-transpeptidase YafK (246 aa).

The signal sequence occupies residues 1–19 (MRKIALILAMLLIPCVSFA). In terms of domain architecture, L,D-TPase catalytic spans 44 to 174 (VYIQIFKEER…GQPSVQVSIY (131 aa)). Catalysis depends on H135, which acts as the Proton donor/acceptor. C143 acts as the Nucleophile in catalysis.

This sequence belongs to the YkuD family.

It functions in the pathway cell wall biogenesis; peptidoglycan biosynthesis. The chain is Putative L,D-transpeptidase YafK (yafK) from Escherichia coli O157:H7.